The following is a 142-amino-acid chain: Large ribosomal subunit protein uL11 (142 aa).

The protein belongs to the universal ribosomal protein uL11 family. As to quaternary structure, part of the ribosomal stalk of the 50S ribosomal subunit. Interacts with L10 and the large rRNA to form the base of the stalk. L10 forms an elongated spine to which L12 dimers bind in a sequential fashion forming a multimeric L10(L12)X complex. Post-translationally, one or more lysine residues are methylated.

In terms of biological role, forms part of the ribosomal stalk which helps the ribosome interact with GTP-bound translation factors. This chain is Large ribosomal subunit protein uL11, found in Pectobacterium carotovorum subsp. carotovorum (strain PC1).